Reading from the N-terminus, the 85-residue chain is MADRLRSQAKLEQLQARYVGVGNAFTTKYEWMVNQHRDTLSSVVGHPPLLAYMATALGEPRVQVRKNLLEKMIMPCGPPPPSNQF.

The protein belongs to the SF3B5 family.

This is an uncharacterized protein from Schizosaccharomyces pombe (strain 972 / ATCC 24843) (Fission yeast).